The sequence spans 135 residues: ATP synthase epsilon chain (135 aa).

The protein belongs to the ATPase epsilon chain family. F-type ATPases have 2 components, CF(1) - the catalytic core - and CF(0) - the membrane proton channel. CF(1) has five subunits: alpha(3), beta(3), gamma(1), delta(1), epsilon(1). CF(0) has three main subunits: a, b and c.

It localises to the cell inner membrane. Its function is as follows. Produces ATP from ADP in the presence of a proton gradient across the membrane. The chain is ATP synthase epsilon chain from Rhizobium leguminosarum bv. trifolii (strain WSM2304).